Reading from the N-terminus, the 1887-residue chain is ATP-dependent DNA helicase tlh1 (1887 aa).

The span at 329–347 (NQQRREQQDKGENKKRQDD) shows a compositional bias: basic and acidic residues. Disordered stretches follow at residues 329-372 (NQQR…EEEE), 504-552 (ERKE…NTDD), and 1110-1135 (MVEGDKEKDKTNEEKNKDEVKAEMTQ). 2 stretches are compositionally biased toward acidic residues: residues 360–372 (LEDDEKDNDEEEE) and 524–533 (SAEDDNDNDN). The segment covering 540–549 (NNNNNNNNTN) has biased composition (low complexity). Residues 1112 to 1131 (EGDKEKDKTNEEKNKDEVKA) are compositionally biased toward basic and acidic residues. The region spanning 1200–1375 (YFSLLNRMNL…RQTFCTNFYV (176 aa)) is the Helicase ATP-binding domain. ATP contacts are provided by residues 1213 to 1220 (LPTGGGKS) and 1240 to 1247 (MNMVTLVL). The DEAH box signature appears at 1322–1325 (DEAH). Residues 1401-1559 (DLRTLMKRTK…CVRSFLASEM (159 aa)) enclose the Helicase C-terminal domain. The segment at 1613–1643 (YNASFSSSPPPQPGNSSGMSAMNTNTTSTTP) is disordered. Residues 1626–1642 (GNSSGMSAMNTNTTSTT) show a composition bias toward low complexity. The CCHC-type zinc-finger motif lies at 1804-1821 (STCYKCGKADHNLRECKL).

The protein belongs to the helicase family. RecQ subfamily.

It catalyses the reaction Couples ATP hydrolysis with the unwinding of duplex DNA by translocating in the 3'-5' direction.. It carries out the reaction ATP + H2O = ADP + phosphate + H(+). Its function is as follows. A probable ATP-dependent 3'-5' DNA helicase. Has a role in telomerase-independent telomere maintenance. This chain is ATP-dependent DNA helicase tlh1, found in Schizosaccharomyces pombe (strain 972 / ATCC 24843) (Fission yeast).